A 245-amino-acid chain; its full sequence is Ribosomal RNA small subunit methyltransferase G (245 aa).

Residues glycine 85, phenylalanine 90, 108-110, 136-137, and arginine 155 each bind S-adenosyl-L-methionine; these read DST and AE.

It belongs to the methyltransferase superfamily. RNA methyltransferase RsmG family.

The protein localises to the cytoplasm. Specifically methylates the N7 position of a guanine in 16S rRNA. The sequence is that of Ribosomal RNA small subunit methyltransferase G from Nostoc sp. (strain PCC 7120 / SAG 25.82 / UTEX 2576).